Here is a 66-residue protein sequence, read N- to C-terminus: Small ribosomal subunit protein bS21 (66 aa).

The protein belongs to the bacterial ribosomal protein bS21 family.

This is Small ribosomal subunit protein bS21 from Maridesulfovibrio salexigens (strain ATCC 14822 / DSM 2638 / NCIMB 8403 / VKM B-1763) (Desulfovibrio salexigens).